A 334-amino-acid chain; its full sequence is Heat-inducible transcription repressor HrcA (334 aa).

It belongs to the HrcA family.

Functionally, negative regulator of class I heat shock genes (grpE-dnaK-dnaJ and groELS operons). Prevents heat-shock induction of these operons. This is Heat-inducible transcription repressor HrcA from Acidovorax sp. (strain JS42).